Here is a 357-residue protein sequence, read N- to C-terminus: DNA replication and repair protein RecF (357 aa).

30–37 contributes to the ATP binding site; it reads GPNGSGKT.

Belongs to the RecF family.

Its subcellular location is the cytoplasm. The RecF protein is involved in DNA metabolism; it is required for DNA replication and normal SOS inducibility. RecF binds preferentially to single-stranded, linear DNA. It also seems to bind ATP. The chain is DNA replication and repair protein RecF from Vibrio campbellii (strain ATCC BAA-1116).